A 326-amino-acid polypeptide reads, in one-letter code: DnaJ homolog subfamily B member 6 (326 aa).

The region spanning 3 to 69 is the J domain; that stretch reads DYYEVLGVQK…KKRDIYDRFG (67 aa). A disordered region spans residues 249–326; sequence ALPFQPTNTR…KKKKSTKGSY (78 aa). The residue at position 277 (S277) is a Phosphoserine.

Homooligomer.

It localises to the cytoplasm. It is found in the perinuclear region. The protein resides in the nucleus. Its function is as follows. Has a stimulatory effect on the ATPase activity of HSP70 in a dose-dependent and time-dependent manner and hence acts as a co-chaperone of HSP70. Plays an indispensable role in the organization of KRT8/KRT18 filaments. Acts as an endogenous molecular chaperone for neuronal proteins including huntingtin. Suppresses aggregation and toxicity of polyglutamine-containing, aggregation-prone proteins. Also reduces cellular toxicity and caspase-3 activity. In Gallus gallus (Chicken), this protein is DnaJ homolog subfamily B member 6.